Reading from the N-terminus, the 201-residue chain is Peptidyl-prolyl cis-trans isomerase FKBP11 (201 aa).

Residues 1 to 27 (MTLSPLLLPLQLLLLLLFSGAVCRAEA) form the signal peptide. A PPIase FKBP-type domain is found at 57–144 (GDTLHIHYTG…QYDVELIALI (88 aa)). A helical membrane pass occupies residues 156–176 (ILPLVGIAMVPALLGLIGYHL).

The protein belongs to the FKBP-type PPIase family. As to quaternary structure, interacts with IFITM5.

The protein localises to the membrane. The enzyme catalyses [protein]-peptidylproline (omega=180) = [protein]-peptidylproline (omega=0). PPIases accelerate the folding of proteins during protein synthesis. The sequence is that of Peptidyl-prolyl cis-trans isomerase FKBP11 (Fkbp11) from Mus musculus (Mouse).